The sequence spans 117 residues: Large ribosomal subunit protein uL18 (117 aa).

This sequence belongs to the universal ribosomal protein uL18 family. In terms of assembly, part of the 50S ribosomal subunit; part of the 5S rRNA/L5/L18/L25 subcomplex. Contacts the 5S and 23S rRNAs.

Its function is as follows. This is one of the proteins that bind and probably mediate the attachment of the 5S RNA into the large ribosomal subunit, where it forms part of the central protuberance. The sequence is that of Large ribosomal subunit protein uL18 from Neisseria gonorrhoeae (strain ATCC 700825 / FA 1090).